Here is a 449-residue protein sequence, read N- to C-terminus: Keratin, type I cytoskeletal 27 (449 aa).

Residues Met1–Asn73 form a head region. Positions Glu74 to Trp109 are coil 1A. The IF rod domain occupies Glu74 to Cys389. Residues Tyr110–Ile131 form a linker 1 region. A coil 1B region spans residues Ile132–Leu223. The linker 12 stretch occupies residues Gln224–Leu246. The segment at Leu247–Asp385 is coil 2. The tract at residues Glu386 to Ser449 is tail. The segment at Leu425–Ser449 is disordered. Positions His430–Ser449 are enriched in basic and acidic residues.

It belongs to the intermediate filament family. As to quaternary structure, heterotetramer of two type I and two type II keratins. Interacts with KRT6A to form filaments.

It is found in the cytoplasm. In terms of biological role, essential for the proper assembly of type I and type II keratin protein complexes and formation of keratin intermediate filaments in the inner root sheath (irs). This chain is Keratin, type I cytoskeletal 27, found in Rattus norvegicus (Rat).